The sequence spans 188 residues: Adenylate kinase (188 aa).

12-17 (GVGKGT) serves as a coordination point for ATP. The NMP stretch occupies residues 32-61 (STGDIFRSAMANHTELGDKAKSFMDAGNLV). Residues T33, R38, 59-61 (NLV), 89-92 (GYPR), and Q96 each bind AMP. The interval 130–136 (GRGREDD) is LID. ATP is bound at residue R131. The AMP site is built by R133 and R144. Residue G172 participates in ATP binding.

Belongs to the adenylate kinase family. As to quaternary structure, monomer.

It is found in the cytoplasm. It carries out the reaction AMP + ATP = 2 ADP. It functions in the pathway purine metabolism; AMP biosynthesis via salvage pathway; AMP from ADP: step 1/1. Catalyzes the reversible transfer of the terminal phosphate group between ATP and AMP. Plays an important role in cellular energy homeostasis and in adenine nucleotide metabolism. The sequence is that of Adenylate kinase from Oenococcus oeni (strain ATCC BAA-331 / PSU-1).